Reading from the N-terminus, the 1173-residue chain is DNA-directed RNA polymerase subunit beta (1173 aa).

It belongs to the RNA polymerase beta chain family. As to quaternary structure, the RNAP catalytic core consists of 2 alpha, 1 beta, 1 beta' and 1 omega subunit. When a sigma factor is associated with the core the holoenzyme is formed, which can initiate transcription.

The catalysed reaction is RNA(n) + a ribonucleoside 5'-triphosphate = RNA(n+1) + diphosphate. DNA-dependent RNA polymerase catalyzes the transcription of DNA into RNA using the four ribonucleoside triphosphates as substrates. The polypeptide is DNA-directed RNA polymerase subunit beta (Kosmotoga olearia (strain ATCC BAA-1733 / DSM 21960 / TBF 19.5.1)).